The following is a 729-amino-acid chain: Fatty acid oxidation complex subunit alpha (729 aa).

Residues 1–189 are enoyl-CoA hydratase/isomerase; the sequence is MLYKGDTLYL…KIGLVDGVVK (189 aa). Residue aspartate 296 coordinates substrate. The tract at residues 311 to 729 is 3-hydroxyacyl-CoA dehydrogenase; sequence ETPKQAAVLG…ARPVGDLKTA (419 aa). NAD(+) contacts are provided by residues methionine 324, aspartate 343, 400 to 402, lysine 407, and serine 429; that span reads VVE. The For 3-hydroxyacyl-CoA dehydrogenase activity role is filled by histidine 450. Residue asparagine 453 coordinates NAD(+). Residues asparagine 500 and tyrosine 660 each coordinate substrate. Residues 708–729 are disordered; sequence RHNEPYYPPVEPARPVGDLKTA.

The protein in the N-terminal section; belongs to the enoyl-CoA hydratase/isomerase family. In the C-terminal section; belongs to the 3-hydroxyacyl-CoA dehydrogenase family. Heterotetramer of two alpha chains (FadB) and two beta chains (FadA).

The catalysed reaction is a (3S)-3-hydroxyacyl-CoA + NAD(+) = a 3-oxoacyl-CoA + NADH + H(+). The enzyme catalyses a (3S)-3-hydroxyacyl-CoA = a (2E)-enoyl-CoA + H2O. It carries out the reaction a 4-saturated-(3S)-3-hydroxyacyl-CoA = a (3E)-enoyl-CoA + H2O. It catalyses the reaction (3S)-3-hydroxybutanoyl-CoA = (3R)-3-hydroxybutanoyl-CoA. The catalysed reaction is a (3Z)-enoyl-CoA = a 4-saturated (2E)-enoyl-CoA. The enzyme catalyses a (3E)-enoyl-CoA = a 4-saturated (2E)-enoyl-CoA. Its pathway is lipid metabolism; fatty acid beta-oxidation. In terms of biological role, involved in the aerobic and anaerobic degradation of long-chain fatty acids via beta-oxidation cycle. Catalyzes the formation of 3-oxoacyl-CoA from enoyl-CoA via L-3-hydroxyacyl-CoA. It can also use D-3-hydroxyacyl-CoA and cis-3-enoyl-CoA as substrate. This is Fatty acid oxidation complex subunit alpha from Escherichia coli (strain UTI89 / UPEC).